The following is a 711-amino-acid chain: Interferon-induced GTP-binding protein Mx2 (711 aa).

Disordered stretches follow at residues 1 to 26 and 62 to 88; these read MPKP…HKEM and MLTL…NLYS. Residues 66-82 are compositionally biased toward low complexity; sequence SPQQPGGKSGQQTSKGP. One can recognise a Dynamin-type G domain in the interval 112–383; it reads DLALPTIAVI…LIGHISKSLP (272 aa). Residues 122–129 form a G1 motif region; the sequence is GDQSSGKS. 122-129 serves as a coordination point for GTP; sequence GDQSSGKS. Residues 147 to 149 are G2 motif; sequence ITR. The tract at residues 221–224 is G3 motif; it reads DLPG. Residues 221 to 225 and 290 to 293 each bind GTP; these read DLPGI and TKPD. Residues 290-293 form a G4 motif region; it reads TKPD. Residues 322–325 form a G5 motif region; the sequence is KCRG. In terms of domain architecture, GED spans 619-710; sequence ITEIGVHVNA…TLSKFAQSLQ (92 aa).

The protein belongs to the TRAFAC class dynamin-like GTPase superfamily. Dynamin/Fzo/YdjA family. In terms of tissue distribution, ubiquitous.

The protein resides in the cytoplasm. It localises to the nucleus. Interferon-induced dynamin-like GTPase with antiviral activity against influenza virus A (FLUAV). The chain is Interferon-induced GTP-binding protein Mx2 (MX2) from Sus scrofa (Pig).